A 420-amino-acid chain; its full sequence is Acetyl-CoA acetyltransferase B, mitochondrial (420 aa).

The transit peptide at 1-33 directs the protein to the mitochondrion; that stretch reads MAFCGPRTAARLSHSTRALHYTHRSFASPRTLN. The active-site Acyl-thioester intermediate is the cysteine 119. CoA contacts are provided by residues tyrosine 212, 251–253, and lysine 256; that span reads RVD. A K(+)-binding site is contributed by tyrosine 212. K(+) is bound by residues alanine 273 and alanine 274. Serine 277 contacts CoA. Position 374 (valine 374) interacts with K(+). The Proton donor/acceptor role is filled by cysteine 406.

Belongs to the thiolase-like superfamily. Thiolase family. As to quaternary structure, homotetramer.

It localises to the mitochondrion. The enzyme catalyses 2 acetyl-CoA = acetoacetyl-CoA + CoA. It carries out the reaction propanoyl-CoA + acetyl-CoA = 2-methyl-3-oxobutanoyl-CoA + CoA. Its pathway is lipid metabolism; fatty acid beta-oxidation. Its function is as follows. This is one of the enzymes that catalyzes the last step of the mitochondrial beta-oxidation pathway, an aerobic process breaking down fatty acids into acetyl-CoA. Using free coenzyme A/CoA, catalyzes the thiolytic cleavage of medium- to long-chain 3-oxoacyl-CoAs into acetyl-CoA and a fatty acyl-CoA shortened by two carbon atoms. The activity of the enzyme is reversible and it can also catalyze the condensation of two acetyl-CoA molecules into acetoacetyl-CoA. Thereby, it plays a major role in ketone body metabolism. The sequence is that of Acetyl-CoA acetyltransferase B, mitochondrial (acat1-b) from Xenopus laevis (African clawed frog).